The chain runs to 429 residues: Endo-beta-1,4-galactanase (429 aa).

An N-terminal signal peptide occupies residues 1-21; that stretch reads MKSKVKMFFAAAIVWSACSST. 146-149 is a substrate binding site; sequence DPAK. The active-site Proton donor is the E194. Substrate contacts are provided by residues 233–234 and H267; that span reads TN. Residue E292 is the Nucleophile of the active site. A substrate-binding site is contributed by T296. Positions 301, 303, 305, and 307 each coordinate Ca(2+). Substrate-binding residues include K311 and D388. Residues S396 and D399 each coordinate Ca(2+).

The protein belongs to the glycosyl hydrolase 53 family. The cofactor is Ca(2+).

The protein localises to the secreted. It catalyses the reaction The enzyme specifically hydrolyzes (1-&gt;4)-beta-D-galactosidic linkages in type I arabinogalactans.. Its function is as follows. Involved in galactan degradation. Degrades arabinose-free galactan to galactooligosaccharides, producing galactotetraose as the main product along with galactotriose, galactobiose, and galactose. Is also able to degrade galactotetraose, galactotriose and galactobiose, suggesting an additional exo-mode of activity. May hydrolyze the beta-1,4-galactan linkages of the galactan portion of arabinogalactan type I, a pectic plant polysaccharide from which most of the arabinose has been removed. The polypeptide is Endo-beta-1,4-galactanase (Bacillus subtilis (strain 168)).